Here is a 371-residue protein sequence, read N- to C-terminus: Geranylgeranyl pyrophosphate synthase paxG (371 aa).

Isopentenyl diphosphate-binding residues include Lys-89, Arg-92, and His-121. Mg(2+) contacts are provided by Asp-128 and Asp-132. Arg-137 lines the dimethylallyl diphosphate pocket. Arg-138 is a binding site for isopentenyl diphosphate. Dimethylallyl diphosphate contacts are provided by Lys-215, Thr-216, and Gln-249. Asp-252 is a binding site for Mg(2+). Dimethylallyl diphosphate-binding residues include Asn-256, Lys-266, and Lys-276. The Peroxisomal targeting signal motif lies at 369 to 371; the sequence is GRV.

The protein belongs to the FPP/GGPP synthase family. It depends on Mg(2+) as a cofactor.

It is found in the peroxisome. The enzyme catalyses isopentenyl diphosphate + dimethylallyl diphosphate = (2E)-geranyl diphosphate + diphosphate. It catalyses the reaction isopentenyl diphosphate + (2E)-geranyl diphosphate = (2E,6E)-farnesyl diphosphate + diphosphate. It carries out the reaction isopentenyl diphosphate + (2E,6E)-farnesyl diphosphate = (2E,6E,10E)-geranylgeranyl diphosphate + diphosphate. It functions in the pathway secondary metabolite biosynthesis. Functionally, geranylgeranyl pyrophosphate synthase; part of the gene cluster that mediates the biosynthesis of paxilline, a mycotoxin that acts as an inhibitor of mammalian maxi-K channels. PaxG, the geranylgeranyl diphosphate (GGPP) synthase is proposed to catalyze the first step in paxilline biosynthesis. Condensation of indole-3-glycerol phosphate with GGPP by paxC then forms 3-geranylgeranylindole (3-GGI), followed by epoxidation and cyclization of this intermediate (by paxM and paxB) to form paspaline. Paspaline is subsequently converted to 13-desoxypaxilline by paxP, the latter being then converted to paxilline by paxQ. Finally paxilline can be mono- and di-prenylated by paxD. The chain is Geranylgeranyl pyrophosphate synthase paxG from Penicillium paxilli.